A 167-amino-acid polypeptide reads, in one-letter code: Bacterial non-heme ferritin-like protein (167 aa).

Residues 1 to 145 enclose the Ferritin-like diiron domain; that stretch reads MATAGMLLKL…TILDEVRSAK (145 aa).

This sequence belongs to the ferritin family. Prokaryotic subfamily.

The protein localises to the cytoplasm. This is Bacterial non-heme ferritin-like protein (ftnB) from Escherichia coli O157:H7.